Consider the following 1045-residue polypeptide: Elongation factor 3 (1045 aa).

7 HEAT repeats span residues 5-42, 43-85, 86-123, 125-162, 166-203, 205-241, and 242-279; these read DQSL…GNII, EHDI…PSVE, PFVI…AINP, AIKA…AAKE, LRMP…TVDN, DIER…EVTP, and ATLS…LVED. The ADP site is built by Ile-42, His-44, and Ser-83. Positions 392, 396, and 397 each coordinate ADP. ABC transporter domains lie at 426-641 and 667-993; these read DEGE…YYEL and VKVS…KKED. ADP is bound by residues Asn-703, Glu-922, Asn-925, and His-951. The disordered stretch occupies residues 974–1045; that stretch reads SGHNWVSGQG…AYVSSDDEDF (72 aa). Residues 1007–1031 show a composition bias toward basic residues; the sequence is GGKKKKKLSSAELRKKKKERMKKKK.

This sequence belongs to the ABC transporter superfamily. ABCF family. EF3 subfamily. Monomer.

The protein localises to the cytoplasm. It localises to the cytosol. It carries out the reaction ATP + H2O = ADP + phosphate + H(+). The protein operates within protein biosynthesis; polypeptide chain elongation. Functionally, ribosome-dependent ATPase that functions in cytoplasmic translation elongation. Required for the ATP-dependent release of deacylated tRNA from the ribosomal E-site during protein biosynthesis. Stimulates the eEF1A-dependent binding of aminoacyl-tRNA to the ribosomal A-site, which has reduced affinity for tRNA as long as the E-site is occupied. Assists translation termination by stimulating the release of nascent protein from the ribosome by release factors. This Candida glabrata (strain ATCC 2001 / BCRC 20586 / JCM 3761 / NBRC 0622 / NRRL Y-65 / CBS 138) (Yeast) protein is Elongation factor 3 (TEF3).